A 551-amino-acid polypeptide reads, in one-letter code: Trigger factor (551 aa).

Positions 165-250 (GDLVVLDFAG…ATDVRVPGET (86 aa)) constitute a PPIase FKBP-type domain. The tract at residues 442 to 551 (ADDDTIGKGH…APAKKKAAAE (110 aa)) is disordered. Residues 458–472 (GHDHHDHDHDHDHAA) show a composition bias toward basic and acidic residues. Residues 513 to 541 (EAAPAPKKAPAKKAAAAKAEEAPAAAPKK) show a composition bias toward low complexity. Residues 542 to 551 (APAKKKAAAE) show a composition bias toward basic residues.

Belongs to the FKBP-type PPIase family. Tig subfamily.

It localises to the cytoplasm. The catalysed reaction is [protein]-peptidylproline (omega=180) = [protein]-peptidylproline (omega=0). In terms of biological role, involved in protein export. Acts as a chaperone by maintaining the newly synthesized protein in an open conformation. Functions as a peptidyl-prolyl cis-trans isomerase. This Rhizorhabdus wittichii (strain DSM 6014 / CCUG 31198 / JCM 15750 / NBRC 105917 / EY 4224 / RW1) (Sphingomonas wittichii) protein is Trigger factor.